The primary structure comprises 301 residues: Acetylglutamate kinase (301 aa).

Residues 70–71 (GG), Arg92, and Asn185 contribute to the substrate site.

This sequence belongs to the acetylglutamate kinase family. ArgB subfamily.

The protein resides in the cytoplasm. It carries out the reaction N-acetyl-L-glutamate + ATP = N-acetyl-L-glutamyl 5-phosphate + ADP. The protein operates within amino-acid biosynthesis; L-arginine biosynthesis; N(2)-acetyl-L-ornithine from L-glutamate: step 2/4. Catalyzes the ATP-dependent phosphorylation of N-acetyl-L-glutamate. The chain is Acetylglutamate kinase from Synechococcus elongatus (strain ATCC 33912 / PCC 7942 / FACHB-805) (Anacystis nidulans R2).